The sequence spans 72 residues: Translation initiation factor IF-1 (72 aa).

Positions 1–72 constitute an S1-like domain; the sequence is MTKEDNIEMQ…TKGRIIFRSR (72 aa).

The protein belongs to the IF-1 family. Component of the 30S ribosomal translation pre-initiation complex which assembles on the 30S ribosome in the order IF-2 and IF-3, IF-1 and N-formylmethionyl-tRNA(fMet); mRNA recruitment can occur at any time during PIC assembly.

The protein resides in the cytoplasm. In terms of biological role, one of the essential components for the initiation of protein synthesis. Stabilizes the binding of IF-2 and IF-3 on the 30S subunit to which N-formylmethionyl-tRNA(fMet) subsequently binds. Helps modulate mRNA selection, yielding the 30S pre-initiation complex (PIC). Upon addition of the 50S ribosomal subunit IF-1, IF-2 and IF-3 are released leaving the mature 70S translation initiation complex. This Buchnera aphidicola subsp. Schizaphis graminum (strain Sg) protein is Translation initiation factor IF-1.